The following is a 401-amino-acid chain: Argininosuccinate synthase (401 aa).

9–17 (AYSGGLDTS) serves as a coordination point for ATP. L-citrulline is bound at residue Tyr88. Gly118 serves as a coordination point for ATP. L-aspartate-binding residues include Thr120, Asn124, and Asp125. Asn124 contributes to the L-citrulline binding site. L-citrulline contacts are provided by Arg128, Ser177, Ser186, Glu262, and Tyr274.

The protein belongs to the argininosuccinate synthase family. Type 1 subfamily. In terms of assembly, homotetramer.

Its subcellular location is the cytoplasm. It catalyses the reaction L-citrulline + L-aspartate + ATP = 2-(N(omega)-L-arginino)succinate + AMP + diphosphate + H(+). Its pathway is amino-acid biosynthesis; L-arginine biosynthesis; L-arginine from L-ornithine and carbamoyl phosphate: step 2/3. The sequence is that of Argininosuccinate synthase from Chlorobaculum tepidum (strain ATCC 49652 / DSM 12025 / NBRC 103806 / TLS) (Chlorobium tepidum).